We begin with the raw amino-acid sequence, 257 residues long: Acetyl-coenzyme A carboxylase carboxyl transferase subunit beta 1 (257 aa).

Residues 1–257 (MNINDIFLKR…KMHVNTGGEA (257 aa)) form the CoA carboxyltransferase N-terminal domain.

The protein belongs to the AccD/PCCB family. In terms of assembly, acetyl-CoA carboxylase is a heterohexamer composed of biotin carboxyl carrier protein (AccB), biotin carboxylase (AccC) and two subunits each of ACCase subunit alpha (AccA) and ACCase subunit beta (AccD).

The protein localises to the cytoplasm. The enzyme catalyses N(6)-carboxybiotinyl-L-lysyl-[protein] + acetyl-CoA = N(6)-biotinyl-L-lysyl-[protein] + malonyl-CoA. It participates in lipid metabolism; malonyl-CoA biosynthesis; malonyl-CoA from acetyl-CoA: step 1/1. Component of the acetyl coenzyme A carboxylase (ACC) complex. Biotin carboxylase (BC) catalyzes the carboxylation of biotin on its carrier protein (BCCP) and then the CO(2) group is transferred by the transcarboxylase to acetyl-CoA to form malonyl-CoA. The polypeptide is Acetyl-coenzyme A carboxylase carboxyl transferase subunit beta 1 (Lachnospira eligens (strain ATCC 27750 / DSM 3376 / VPI C15-48 / C15-B4) (Eubacterium eligens)).